The sequence spans 59 residues: UPF0434 protein Ping_0902 (59 aa).

The protein belongs to the UPF0434 family.

The polypeptide is UPF0434 protein Ping_0902 (Psychromonas ingrahamii (strain DSM 17664 / CCUG 51855 / 37)).